A 131-amino-acid chain; its full sequence is Fluoride-specific ion channel FluC (131 aa).

4 helical membrane-spanning segments follow: residues 10-30, 36-56, 71-91, and 99-119; these read AAVA…SGLV, FPMG…FLTW, LATV…YETV, and VLSI…VLGG. Residues Gly78 and Thr81 each contribute to the Na(+) site.

The protein belongs to the fluoride channel Fluc/FEX (TC 1.A.43) family.

The protein resides in the cell membrane. It catalyses the reaction fluoride(in) = fluoride(out). Its activity is regulated as follows. Na(+) is not transported, but it plays an essential structural role and its presence is essential for fluoride channel function. In terms of biological role, fluoride-specific ion channel. Important for reducing fluoride concentration in the cell, thus reducing its toxicity. This is Fluoride-specific ion channel FluC from Methanopyrus kandleri (strain AV19 / DSM 6324 / JCM 9639 / NBRC 100938).